The following is a 380-amino-acid chain: 1-deoxy-D-xylulose 5-phosphate reductoisomerase (380 aa).

Positions 10, 11, 12, 13, 36, 37, 38, and 120 each coordinate NADPH. Position 121 (Lys121) interacts with 1-deoxy-D-xylulose 5-phosphate. Glu122 serves as a coordination point for NADPH. Residue Asp146 coordinates Mn(2+). 1-deoxy-D-xylulose 5-phosphate is bound by residues Ser147, Glu148, Ser172, and His195. Glu148 serves as a coordination point for Mn(2+). NADPH is bound at residue Gly201. Positions 208, 213, 214, and 217 each coordinate 1-deoxy-D-xylulose 5-phosphate. Glu217 contacts Mn(2+).

Belongs to the DXR family. Mg(2+) serves as cofactor. The cofactor is Mn(2+).

The enzyme catalyses 2-C-methyl-D-erythritol 4-phosphate + NADP(+) = 1-deoxy-D-xylulose 5-phosphate + NADPH + H(+). It participates in isoprenoid biosynthesis; isopentenyl diphosphate biosynthesis via DXP pathway; isopentenyl diphosphate from 1-deoxy-D-xylulose 5-phosphate: step 1/6. Its function is as follows. Catalyzes the NADPH-dependent rearrangement and reduction of 1-deoxy-D-xylulose-5-phosphate (DXP) to 2-C-methyl-D-erythritol 4-phosphate (MEP). The polypeptide is 1-deoxy-D-xylulose 5-phosphate reductoisomerase (Bacillus cereus (strain AH187)).